Reading from the N-terminus, the 173-residue chain is Transcription factor E (173 aa).

The HTH TFE/IIEalpha-type domain maps to 9–92 (ADKAIFAYLH…LWELELDNMY (84 aa)).

The protein belongs to the TFE family. As to quaternary structure, monomer. Interaction with RNA polymerase subunits RpoF and RpoE is necessary for Tfe stimulatory transcription activity. Able to interact with Tbp and RNA polymerase in the absence of DNA promoter. Interacts both with the preinitiation and elongation complexes.

Functionally, transcription factor that plays a role in the activation of archaeal genes transcribed by RNA polymerase. Facilitates transcription initiation by enhancing TATA-box recognition by TATA-box-binding protein (Tbp), and transcription factor B (Tfb) and RNA polymerase recruitment. Not absolutely required for transcription in vitro, but particularly important in cases where Tbp or Tfb function is not optimal. It dynamically alters the nucleic acid-binding properties of RNA polymerases by stabilizing the initiation complex and destabilizing elongation complexes. Seems to translocate with the RNA polymerase following initiation and acts by binding to the non template strand of the transcription bubble in elongation complexes. This Methanospirillum hungatei JF-1 (strain ATCC 27890 / DSM 864 / NBRC 100397 / JF-1) protein is Transcription factor E.